Here is a 63-residue protein sequence, read N- to C-terminus: Small ribosomal subunit protein eS17 (63 aa).

It belongs to the eukaryotic ribosomal protein eS17 family.

The protein is Small ribosomal subunit protein eS17 of Methanococcus maripaludis (strain C7 / ATCC BAA-1331).